A 111-amino-acid polypeptide reads, in one-letter code: uncharacterized protein (111 aa).

A coiled-coil region spans residues 3-29 (RKITSYKTSLQGLREENEDVELMNLNL). The PPM-type phosphatase domain maps to 6 to 111 (TSYKTSLQGL…TWWMYCSSYY (106 aa)).

This is an uncharacterized protein from Acanthamoeba polyphaga mimivirus (APMV).